Consider the following 157-residue polypeptide: UPF0225 protein Psyr_3863 (157 aa).

It belongs to the UPF0225 family.

This chain is UPF0225 protein Psyr_3863, found in Pseudomonas syringae pv. syringae (strain B728a).